The chain runs to 279 residues: Undecaprenyl-diphosphatase (279 aa).

Helical transmembrane passes span 2 to 22 (LFIELLKAIFFGVIEGVTEWL), 44 to 64 (AFMEMFNIVIQLGAIIAVIVI), 85 to 105 (WQLWLKVAIACIPSIIIAVPL), 113 to 133 (FNHMLPIAIALIVYGIAFLWI), 163 to 183 (VLSIIPGTSRSGATILGAIIL), 188 to 208 (TVAADFTFFLAIPTMFGYSGL), 225 to 245 (LLVLLVASLTAFAVSLYVIKL), and 255 to 275 (FTVFGRYRIVLGSLLIVYSVF).

This sequence belongs to the UppP family.

The protein localises to the cell membrane. The catalysed reaction is di-trans,octa-cis-undecaprenyl diphosphate + H2O = di-trans,octa-cis-undecaprenyl phosphate + phosphate + H(+). Catalyzes the dephosphorylation of undecaprenyl diphosphate (UPP). Confers resistance to bacitracin. The chain is Undecaprenyl-diphosphatase from Streptococcus equi subsp. zooepidemicus (strain MGCS10565).